A 1128-amino-acid polypeptide reads, in one-letter code: Nck-associated protein 1 (1128 aa).

The segment at 640–665 (AVNKKSKKQTGKKGEPEREKPGVESM) is disordered. Residues 651–665 (KKGEPEREKPGVESM) are compositionally biased toward basic and acidic residues. Residues 995–1015 (IACLLMVFVAVSLPTLASNVM) form a helical membrane-spanning segment.

Belongs to the HEM-1/HEM-2 family.

The protein resides in the cell membrane. The protein localises to the cell projection. It localises to the lamellipodium membrane. In terms of biological role, part of the WAVE complex that regulates lamellipodia formation. The WAVE complex regulates actin filament reorganization via its interaction with the Arp2/3 complex. Actin remodeling activity is regulated by RAC1. Plays a role in neural tube closure. This chain is Nck-associated protein 1 (nckap1), found in Xenopus laevis (African clawed frog).